We begin with the raw amino-acid sequence, 234 residues long: Phosphoglycolate phosphatase (234 aa).

Asp-8 functions as the Nucleophile in the catalytic mechanism. Mg(2+) contacts are provided by Asp-8 and Asp-10. Lys-157 contacts substrate. The Mg(2+) site is built by Asp-180 and Asp-184.

The protein belongs to the archaeal SPP-like hydrolase family. Requires Mg(2+) as cofactor.

The enzyme catalyses 2-phosphoglycolate + H2O = glycolate + phosphate. Catalyzes the dephosphorylation of 2-phosphoglycolate. The sequence is that of Phosphoglycolate phosphatase from Methanoculleus marisnigri (strain ATCC 35101 / DSM 1498 / JR1).